An 89-amino-acid polypeptide reads, in one-letter code: Long neurotoxin homolog NTL2 (89 aa).

An N-terminal signal peptide occupies residues 1–21; it reads MKTLLLSLVVVIIVCLDLGYT. 5 disulfide bridges follow: Cys24–Cys45, Cys27–Cys32, Cys38–Cys66, Cys70–Cys81, and Cys82–Cys87. Residues 54–56 carry the Cell attachment site motif; sequence RGD.

It belongs to the three-finger toxin family. Ancestral subfamily. Orphan group V sub-subfamily. As to expression, expressed by the venom gland.

The protein resides in the secreted. Exhibits M2 muscarinic acetylcholine receptor (CHRM2)-blocking activity, but has a weak binding activity toward nicotinic AChR. Moreover, it inhibits collagen-induced platelet aggregation. This is Long neurotoxin homolog NTL2 from Bungarus multicinctus (Many-banded krait).